Here is a 209-residue protein sequence, read N- to C-terminus: Large ribosomal subunit protein uL4 (209 aa).

The tract at residues 50–78 (STLKKGEVSGGGKKPYQQKHTGRARQGSI) is disordered.

This sequence belongs to the universal ribosomal protein uL4 family. As to quaternary structure, part of the 50S ribosomal subunit.

Its function is as follows. One of the primary rRNA binding proteins, this protein initially binds near the 5'-end of the 23S rRNA. It is important during the early stages of 50S assembly. It makes multiple contacts with different domains of the 23S rRNA in the assembled 50S subunit and ribosome. Functionally, forms part of the polypeptide exit tunnel. This Mycoplasmoides gallisepticum (strain R(low / passage 15 / clone 2)) (Mycoplasma gallisepticum) protein is Large ribosomal subunit protein uL4.